The primary structure comprises 117 residues: Peptidyl-tRNA hydrolase (117 aa).

The protein belongs to the PTH2 family.

The protein localises to the cytoplasm. It catalyses the reaction an N-acyl-L-alpha-aminoacyl-tRNA + H2O = an N-acyl-L-amino acid + a tRNA + H(+). In terms of biological role, the natural substrate for this enzyme may be peptidyl-tRNAs which drop off the ribosome during protein synthesis. This chain is Peptidyl-tRNA hydrolase, found in Thermoplasma volcanium (strain ATCC 51530 / DSM 4299 / JCM 9571 / NBRC 15438 / GSS1).